Reading from the N-terminus, the 128-residue chain is Fluoride-specific ion channel FluC (128 aa).

A run of 4 helical transmembrane segments spans residues Met1 to Ala21, Leu45 to Ser65, Leu70 to Ile90, and Ile99 to Phe119. Na(+)-binding residues include Gly78 and Thr81.

It belongs to the fluoride channel Fluc/FEX (TC 1.A.43) family.

The protein localises to the cell inner membrane. It catalyses the reaction fluoride(in) = fluoride(out). With respect to regulation, na(+) is not transported, but it plays an essential structural role and its presence is essential for fluoride channel function. In terms of biological role, fluoride-specific ion channel. Important for reducing fluoride concentration in the cell, thus reducing its toxicity. This Chlorobium phaeobacteroides (strain BS1) protein is Fluoride-specific ion channel FluC.